Consider the following 493-residue polypeptide: tRNA(Ile)-lysidine synthase (493 aa).

Residue Ser-26–Ser-31 coordinates ATP.

Belongs to the tRNA(Ile)-lysidine synthase family.

Its subcellular location is the cytoplasm. The catalysed reaction is cytidine(34) in tRNA(Ile2) + L-lysine + ATP = lysidine(34) in tRNA(Ile2) + AMP + diphosphate + H(+). Its function is as follows. Ligates lysine onto the cytidine present at position 34 of the AUA codon-specific tRNA(Ile) that contains the anticodon CAU, in an ATP-dependent manner. Cytidine is converted to lysidine, thus changing the amino acid specificity of the tRNA from methionine to isoleucine. The chain is tRNA(Ile)-lysidine synthase from Bartonella henselae (strain ATCC 49882 / DSM 28221 / CCUG 30454 / Houston 1) (Rochalimaea henselae).